We begin with the raw amino-acid sequence, 884 residues long: Alanine--tRNA ligase (884 aa).

Histidine 565, histidine 569, cysteine 672, and histidine 676 together coordinate Zn(2+).

The protein belongs to the class-II aminoacyl-tRNA synthetase family. Zn(2+) is required as a cofactor.

The protein resides in the cytoplasm. It catalyses the reaction tRNA(Ala) + L-alanine + ATP = L-alanyl-tRNA(Ala) + AMP + diphosphate. Catalyzes the attachment of alanine to tRNA(Ala) in a two-step reaction: alanine is first activated by ATP to form Ala-AMP and then transferred to the acceptor end of tRNA(Ala). Also edits incorrectly charged Ser-tRNA(Ala) and Gly-tRNA(Ala) via its editing domain. The protein is Alanine--tRNA ligase of Sphingopyxis alaskensis (strain DSM 13593 / LMG 18877 / RB2256) (Sphingomonas alaskensis).